Reading from the N-terminus, the 298-residue chain is Protoheme IX farnesyltransferase (298 aa).

Transmembrane regions (helical) follow at residues 23-43, 47-67, 93-113, 115-135, 143-163, 169-189, 211-231, 236-256, and 278-298; these read LLLLFTMYTAYIVGGGLGKPY, LVVLTLGFITIAAVTALNMYF, VFIATVAATIVSVILAWRIIN, HFALAIVIGFLFDIVAYTYLL, IIAGAVAGGAPALGGWAAAAG, ALLFSLIVATWVPSHIWFLAT, IAVASGIGLGSLVMGYSIVGL, VIGTVSLIVGVIAAIAIFHLA, and MMLGLVFLVMMLEKVVSYIIS.

The protein belongs to the UbiA prenyltransferase family. Protoheme IX farnesyltransferase subfamily.

Its subcellular location is the cell membrane. It catalyses the reaction heme b + (2E,6E)-farnesyl diphosphate + H2O = Fe(II)-heme o + diphosphate. The protein operates within porphyrin-containing compound metabolism; heme O biosynthesis; heme O from protoheme: step 1/1. Its function is as follows. Converts heme B (protoheme IX) to heme O by substitution of the vinyl group on carbon 2 of heme B porphyrin ring with a hydroxyethyl farnesyl side group. In Hyperthermus butylicus (strain DSM 5456 / JCM 9403 / PLM1-5), this protein is Protoheme IX farnesyltransferase.